An 886-amino-acid chain; its full sequence is Translation initiation factor IF-2 (886 aa).

2 disordered regions span residues 46 to 91 and 121 to 297; these read LDHL…VEVR and EQQK…HGFT. Over residues 72–82 the composition is skewed to polar residues; the sequence is STLSVTGSTGK. Basic and acidic residues-rich tracts occupy residues 130–163, 175–239, and 246–260; these read AELK…AERK, AKSE…DHHL, and REAE…EQGT. The region spanning 386-555 is the tr-type G domain; the sequence is PRAPVVTVMG…LNQSELLELT (170 aa). A G1 region spans residues 395–402; sequence GHVDHGKT. Position 395–402 (395–402) interacts with GTP; the sequence is GHVDHGKT. The tract at residues 420–424 is G2; it reads GITQH. The G3 stretch occupies residues 441-444; sequence DTPG. GTP contacts are provided by residues 441–445 and 495–498; these read DTPGH and NKMD. Positions 495–498 are G4; it reads NKMD. A G5 region spans residues 531-533; it reads SAK.

Belongs to the TRAFAC class translation factor GTPase superfamily. Classic translation factor GTPase family. IF-2 subfamily.

The protein localises to the cytoplasm. Its function is as follows. One of the essential components for the initiation of protein synthesis. Protects formylmethionyl-tRNA from spontaneous hydrolysis and promotes its binding to the 30S ribosomal subunits. Also involved in the hydrolysis of GTP during the formation of the 70S ribosomal complex. The protein is Translation initiation factor IF-2 of Pseudoalteromonas translucida (strain TAC 125).